The chain runs to 245 residues: 1-(5-phosphoribosyl)-5-[(5-phosphoribosylamino)methylideneamino] imidazole-4-carboxamide isomerase (245 aa).

The Proton acceptor role is filled by D8. The active-site Proton donor is D130.

The protein belongs to the HisA/HisF family.

The protein localises to the cytoplasm. It carries out the reaction 1-(5-phospho-beta-D-ribosyl)-5-[(5-phospho-beta-D-ribosylamino)methylideneamino]imidazole-4-carboxamide = 5-[(5-phospho-1-deoxy-D-ribulos-1-ylimino)methylamino]-1-(5-phospho-beta-D-ribosyl)imidazole-4-carboxamide. Its pathway is amino-acid biosynthesis; L-histidine biosynthesis; L-histidine from 5-phospho-alpha-D-ribose 1-diphosphate: step 4/9. In Pseudomonas savastanoi pv. phaseolicola (strain 1448A / Race 6) (Pseudomonas syringae pv. phaseolicola (strain 1448A / Race 6)), this protein is 1-(5-phosphoribosyl)-5-[(5-phosphoribosylamino)methylideneamino] imidazole-4-carboxamide isomerase.